Reading from the N-terminus, the 285-residue chain is MEDYILKVEELNYNYSDGTHALKGINMNIKRGEVTAILGGNGVGKSTLFQNFNGILKPSSGRILFDNKPIDYSRKGIMKLRESIGIVFQDPDNQLFSASVYQDVSFGAVNMKLPEDEIRKRVDNALKRTGIEHLKNKPTHCLSFGQKKRVAIAGVLVMEPKVLILDEPTAGLDPMGVSEIMKLLVEMQKELGITIIIATHDIDIVPLYCDNVFVMKEGRVILQGNPKEVFAEKEVIRKVNLRLPRIGHLMEILKEKDGFVFDELDLTIGQARKTINSWKNKIFND.

Residues 6–242 (LKVEELNYNY…KEVIRKVNLR (237 aa)) enclose the ABC transporter domain. Position 39 to 46 (39 to 46 (GGNGVGKS)) interacts with ATP.

Belongs to the ABC transporter superfamily. Energy-coupling factor EcfA family. As to quaternary structure, forms a stable energy-coupling factor (ECF) transporter complex composed of 2 membrane-embedded substrate-binding proteins (S component), 2 ATP-binding proteins (A component) and 2 transmembrane proteins (T component).

The protein resides in the cell membrane. In terms of biological role, ATP-binding (A) component of a common energy-coupling factor (ECF) ABC-transporter complex. Unlike classic ABC transporters this ECF transporter provides the energy necessary to transport a number of different substrates. The chain is Energy-coupling factor transporter ATP-binding protein EcfA2 from Clostridium perfringens (strain SM101 / Type A).